The chain runs to 856 residues: Leucine--tRNA ligase (856 aa).

Residues 42 to 52 (PYPSGKLHMGH) carry the 'HIGH' region motif. The short motif at 615 to 619 (KMSKS) is the 'KMSKS' region element. K618 lines the ATP pocket.

Belongs to the class-I aminoacyl-tRNA synthetase family.

Its subcellular location is the cytoplasm. The enzyme catalyses tRNA(Leu) + L-leucine + ATP = L-leucyl-tRNA(Leu) + AMP + diphosphate. The polypeptide is Leucine--tRNA ligase (Chromohalobacter salexigens (strain ATCC BAA-138 / DSM 3043 / CIP 106854 / NCIMB 13768 / 1H11)).